A 214-amino-acid chain; its full sequence is Variable small protein 1 (214 aa).

The signal sequence occupies residues 1 to 18 (MRKRISAIIMTLFMVFMS). Residue Cys19 is the site of N-palmitoyl cysteine attachment. Cys19 is lipidated: S-diacylglycerol cysteine.

The protein belongs to the variable small protein (Vsp) family.

The protein localises to the cell outer membrane. The Vlp and Vsp proteins are antigenically distinct proteins, only one vlp or vsp gene is transcriptionally active at any one time. Switching between these genes is a mechanism of host immune response evasion. This Borrelia hermsii protein is Variable small protein 1.